The following is a 284-amino-acid chain: MQNKIVKIGNIDVANDKPFVLFGGMNVLESRDMAMQVCEAYVKVTEKLGVPYVFKASFDKANRSSIHSYRGPGMEEGLKIFQELKDTFGVKIITDVHEIYQCQPVADVVDIIQLPAFLARQTDLVEAMAKTGAVINVKKPQFLSPGQMGNIVEKIEECGNDKIILCDRGTNFGYDNLIVDMLGFSVMKKASKGSPVIFDVTHSLQCRDPFGAASSGRRAQVTELARSGLAVGIAGLFLEAHPNPNQAKCDGPSALPLSALEGFVSQMKAIDDLVKSFPELDTSI.

This sequence belongs to the KdsA family.

The protein localises to the cytoplasm. The catalysed reaction is D-arabinose 5-phosphate + phosphoenolpyruvate + H2O = 3-deoxy-alpha-D-manno-2-octulosonate-8-phosphate + phosphate. It participates in carbohydrate biosynthesis; 3-deoxy-D-manno-octulosonate biosynthesis; 3-deoxy-D-manno-octulosonate from D-ribulose 5-phosphate: step 2/3. It functions in the pathway bacterial outer membrane biogenesis; lipopolysaccharide biosynthesis. This Haemophilus influenzae (strain 86-028NP) protein is 2-dehydro-3-deoxyphosphooctonate aldolase.